Reading from the N-terminus, the 212-residue chain is Probable GH family 25 lysozyme 2 (212 aa).

Residues 1–19 form the signal peptide; the sequence is MRFIALLISFFALLKVISA. The region spanning 20–212 is the Ch-type lysozyme domain; it reads ISGVDISSAS…GLGFDLNWYP (193 aa). Catalysis depends on residues D24, D112, and E114.

Belongs to the glycosyl hydrolase 25 family.

The protein resides in the secreted. It carries out the reaction Hydrolysis of (1-&gt;4)-beta-linkages between N-acetylmuramic acid and N-acetyl-D-glucosamine residues in a peptidoglycan and between N-acetyl-D-glucosamine residues in chitodextrins.. This chain is Probable GH family 25 lysozyme 2, found in Dictyostelium discoideum (Social amoeba).